We begin with the raw amino-acid sequence, 324 residues long: bZIP transcription factor 46 (324 aa).

The disordered stretch occupies residues 106-127 (LGGSDDEDPAAAAAAAAPAQRQ). Residues 115–124 (AAAAAAAAPA) are compositionally biased toward low complexity. Residues 242–287 (VERRQRRMIKNRESAARSRARKQAYIMELEAEVAKLKEQKAELQKK) form the bZIP domain. The tract at residues 244 to 263 (RRQRRMIKNRESAARSRARK) is basic motif. The tract at residues 270-284 (LEAEVAKLKEQKAEL) is leucine-zipper.

In terms of assembly, interacts with MODD. Interacts with SAPK2, SAPK6 and SAPK9. Post-translationally, phosphorylated on serine and threonine residues by SAPK2, SAPK6 and SAPK9. Phosphorylation is required for full transactivation activity. Expressed in roots, shoots, leaves, flag leaves, stems, flowers and panicles. Widely expressed.

Its subcellular location is the nucleus. Transcription factor involved in abscisic acid (ABA) signaling pathway. Transcription factor activity is fully activated by ABA. Acts as a positive regulator of the expression of abiotic stress-responsive genes through an ABA-dependent signaling pathway. Acts as a positive regulator of ABA signaling and drought stress tolerance. Plays an important role in ABA and auxin responses. Involved in ABA signaling and stress responses by directly binding to the ABA-responsive element (ABRE)-containing genes, especially WRKY family genes. Modulates response to auxin. Suppresses auxin signaling by targeting ABRE-containing genes related to auxin metabolism or signaling. The polypeptide is bZIP transcription factor 46 (Oryza sativa subsp. japonica (Rice)).